A 222-amino-acid polypeptide reads, in one-letter code: Guanylate kinase (222 aa).

The Guanylate kinase-like domain occupies 19 to 197; the sequence is GFLFILSSPS…SVSLIKSIYL (179 aa). Position 26–33 (26–33) interacts with ATP; it reads SPSGAGKS.

This sequence belongs to the guanylate kinase family.

It is found in the cytoplasm. The enzyme catalyses GMP + ATP = GDP + ADP. Its function is as follows. Essential for recycling GMP and indirectly, cGMP. This chain is Guanylate kinase, found in Bartonella henselae (strain ATCC 49882 / DSM 28221 / CCUG 30454 / Houston 1) (Rochalimaea henselae).